Reading from the N-terminus, the 582-residue chain is Hemagglutinin-neuraminidase (582 aa).

Over 1–34 the chain is Intravirion; sequence MEPSKLFTMSDNATFAPGPVINAADKKTFRTCFR. The helical; Signal-anchor for type II membrane protein transmembrane segment at 35–55 threads the bilayer; sequence ILVLSVQAVTLILVIVTLGEL. The Virion surface portion of the chain corresponds to 56-582; sequence VRMINDQGLS…LPVLTRLTIT (527 aa). A glycan (N-linked (GlcNAc...) asparagine; by host) is linked at N127. Intrachain disulfides connect C178–C202, C192–C253, and C244–C257. Residues 240–245 are involved in neuraminidase activity; the sequence is NRKSCS. Residues N284 and N329 are each glycosylated (N-linked (GlcNAc...) asparagine; by host). 3 disulfides stabilise this stretch: C350–C471, C382–C392, and C465–C475. 3 N-linked (GlcNAc...) asparagine; by host glycosylation sites follow: N400, N448, and N464. N507 is a glycosylation site (N-linked (GlcNAc...) asparagine; by host). A disulfide bridge links C545 with C556.

It belongs to the paramyxoviruses hemagglutinin-neuraminidase family. As to quaternary structure, homotetramer; composed of disulfide-linked homodimers. Interacts with F protein trimer.

It localises to the virion membrane. Its subcellular location is the host cell membrane. It carries out the reaction Hydrolysis of alpha-(2-&gt;3)-, alpha-(2-&gt;6)-, alpha-(2-&gt;8)- glycosidic linkages of terminal sialic acid residues in oligosaccharides, glycoproteins, glycolipids, colominic acid and synthetic substrates.. Attaches the virus to alpha-2,3-linked sialic acid-containing cell receptors and thereby initiating infection. Binding of HN protein to the receptor induces a conformational change that allows the F protein to trigger virion/cell membranes fusion. Binds to the glycan motifs sialyl Lewis (SLe) and GM2 ganglioside (GM2-glycan). Its function is as follows. Neuraminidase (sialidase) activity ensures the efficient spread of the virus by dissociating the mature virions from the neuraminic acid containing glycoproteins. This Mumps virus genotype B (strain Miyahara vaccine) (MuV) protein is Hemagglutinin-neuraminidase (HN).